Reading from the N-terminus, the 446-residue chain is Putrescine N-hydroxylase (446 aa).

FAD-binding residues include Phe17, Asp37, Ser38, Lys39, Trp44, and His45. Residues Thr54, Gln56, and Arg98 each coordinate NADP(+). An FAD-binding site is contributed by Gln56. Residue Val121 participates in FAD binding. Residues Ser199, Lys223, Tyr267, and Leu301 each coordinate NADP(+). FAD contacts are provided by Asn378, Pro389, and Leu391.

This sequence belongs to the lysine N(6)-hydroxylase/L-ornithine N(5)-oxygenase family. Homotetramer. FAD serves as cofactor.

The catalysed reaction is putrescine + NADPH + O2 = N-hydroxyputrescine + NADP(+) + H2O. Its pathway is siderophore biosynthesis. Functionally, N-hydroxylating monooxygenase involved in the biosynthesis of fimsbactin A, the major siderophore produced by A.baumannii. Catalyzes the N-hydroxylation of the aliphatic diamine putrescine into N-hydroxyputrescine (NHP). Putrescine is the preferred substrate, but the enzyme can also catalyze the N-hydroxylation of cadaverine, with 4-fold lower catalytic efficiency. Cannot use lysine or ornithine as substrates. Uses both NADPH and NADH as the reducing cofactor with a preference for NADPH. This is Putrescine N-hydroxylase from Acinetobacter baumannii (strain ATCC 17978 / DSM 105126 / CIP 53.77 / LMG 1025 / NCDC KC755 / 5377).